Consider the following 352-residue polypeptide: Ketol-acid reductoisomerase (NAD(+)) (352 aa).

Positions 11 to 199 (ENVVTSEEFT…AIGSGYLFPT (189 aa)) constitute a KARI N-terminal Rossmann domain. Residues 38-41 (YGVQ) and 100-103 (DAGQ) each bind NAD(+). The active site involves His-124. Position 153 (Gly-153) interacts with NAD(+). The 148-residue stretch at 200–347 (TFEKEVFSDL…AAVRALRPEN (148 aa)) folds into the KARI C-terminal knotted domain. Mg(2+) is bound by residues Asp-208, Glu-212, Glu-244, and Glu-248. Ser-270 serves as a coordination point for substrate.

Belongs to the ketol-acid reductoisomerase family. Mg(2+) serves as cofactor.

It catalyses the reaction (2R)-2,3-dihydroxy-3-methylbutanoate + NAD(+) = (2S)-2-acetolactate + NADH + H(+). It participates in amino-acid biosynthesis; L-isoleucine biosynthesis; L-isoleucine from 2-oxobutanoate: step 2/4. It functions in the pathway amino-acid biosynthesis; L-valine biosynthesis; L-valine from pyruvate: step 2/4. Functionally, involved in the biosynthesis of branched-chain amino acids (BCAA). Catalyzes an alkyl-migration followed by a ketol-acid reduction of (S)-2-acetolactate (S2AL) to yield (R)-2,3-dihydroxy-isovalerate. In the isomerase reaction, S2AL is rearranged via a Mg-dependent methyl migration to produce 3-hydroxy-3-methyl-2-ketobutyrate (HMKB). In the reductase reaction, this 2-ketoacid undergoes a metal-dependent reduction by NADH to yield (R)-2,3-dihydroxy-isovalerate. The polypeptide is Ketol-acid reductoisomerase (NAD(+)) (Desulfosudis oleivorans (strain DSM 6200 / JCM 39069 / Hxd3) (Desulfococcus oleovorans)).